We begin with the raw amino-acid sequence, 247 residues long: MVDREQLVQKARLAEQAERYDDMAAAMKAVTELNEALSNEERNLLSVAYKNVVGARRSSWRVISSIEQKTSADGNEKKIEMVRAYREKIEKELEAVCQDVLNLLDNFLIKNCSETQYESKVFYLKMKGDYYRYLAEVATGEKRATVVESSEKAYSEAHEISKEHMQPTHPIRLGLALNYSVFYYEIQNAPEQACHLAKTAFDDAIAELDTLNEDSYKDSTLIMQLLRDNLTLWTSDQQDDDGGEGNN.

This sequence belongs to the 14-3-3 family. Homodimer, and heterodimer with other family members.

The protein resides in the cytoplasm. Adapter protein implicated in the regulation of a large spectrum of both general and specialized signaling pathways. Binds to a large number of partners, usually by recognition of a phosphoserine or phosphothreonine motif. Binding generally results in the modulation of the activity of the binding partner. This Xenopus laevis (African clawed frog) protein is 14-3-3 protein gamma-B (ywhag-b).